The primary structure comprises 329 residues: Cytosolic arginine sensor for mTORC1 subunit 2 (329 aa).

2 consecutive ACT domains span residues 72–140 and 262–322; these read ADAT…HTLS and ELWK…SALK.

It belongs to the GATS family. As to quaternary structure, forms homodimers and heterodimers with CASTOR1. Interacts with the GATOR2 complex which is composed of MIOS, SEC13, SEH1L, WDR24 and WDR59; the interaction is not regulated by arginine. As to expression, widely expressed.

The protein localises to the cytoplasm. The protein resides in the cytosol. Its function is as follows. Functions as a negative regulator of the TORC1 signaling pathway through the GATOR complex. As part of homodimers or heterodimers with CASTOR1, directly binds and inhibits the GATOR subcomplex GATOR2 and thereby mTORC1. Does not directly bind arginine, but binding of arginine to CASTOR1 disrupts the interaction of CASTOR2-containing heterodimers with GATOR2 which can in turn activate mTORC1 and the TORC1 signaling pathway. The sequence is that of Cytosolic arginine sensor for mTORC1 subunit 2 from Homo sapiens (Human).